A 177-amino-acid chain; its full sequence is Large ribosomal subunit protein uL6 (177 aa).

It belongs to the universal ribosomal protein uL6 family. Part of the 50S ribosomal subunit.

In terms of biological role, this protein binds to the 23S rRNA, and is important in its secondary structure. It is located near the subunit interface in the base of the L7/L12 stalk, and near the tRNA binding site of the peptidyltransferase center. This chain is Large ribosomal subunit protein uL6, found in Aeromonas salmonicida (strain A449).